The primary structure comprises 388 residues: Ribonuclease D (388 aa).

In terms of domain architecture, 3'-5' exonuclease spans 7–173 (ITDSKTLAQF…QIFPKMLEEL (167 aa)). The HRDC domain occupies 212–293 (KADVLGRLKA…ASHAPLAKEE (82 aa)).

This sequence belongs to the RNase D family. It depends on a divalent metal cation as a cofactor.

The protein localises to the cytoplasm. The catalysed reaction is Exonucleolytic cleavage that removes extra residues from the 3'-terminus of tRNA to produce 5'-mononucleotides.. Its function is as follows. Exonuclease involved in the 3' processing of various precursor tRNAs. Initiates hydrolysis at the 3'-terminus of an RNA molecule and releases 5'-mononucleotides. This is Ribonuclease D from Sphingobium indicum (strain DSM 16413 / CCM 7287 / MTCC 6362 / UT26 / NBRC 101211 / UT26S) (Sphingobium japonicum).